The following is a 350-amino-acid chain: MQRALPGARQHLGAILASASVVVKALCAVVLFLYLLSFAVDTGCLAVTPGYLFPPNFWIWTLATHGLMEQHVWDVAISLATVVVAGRLLEPLWGALELLIFFSVVNVSVGLLGALAYLLTYMASFNLVYLFTIRIHGALGFLGGVLVALKQTMGDCVVLRVPQVRVSVVPMLLLALLLLLRLATLLQSPALASYGFGLLSSWVYLRFYQRHSRGRGDMADHFAFATFFPEILQPVVGLLANLVHGLLVKVKICQKTVKRYDVGAPSSITISLPGTDPQDAERRRQLALKALNERLKRVEDQSAWPSMDDDEEEAGAKTDSPLPLEEASTPPGKVTVPESSLITLETAPLL.

At 1–19 (MQRALPGARQHLGAILASA) the chain is on the cytoplasmic side. Residues 1–205 (MQRALPGARQ…FGLLSSWVYL (205 aa)) form a mediates homooligomerization region. Residues 20 to 40 (SVVVKALCAVVLFLYLLSFAV) traverse the membrane as a helical segment. Residues 41–97 (DTGCLAVTPGYLFPPNFWIWTLATHGLMEQHVWDVAISLATVVVAGRLLEPLWGALE) are Lumenal-facing. A helical transmembrane segment spans residues 98-118 (LLIFFSVVNVSVGLLGALAYL). Topologically, residues 119–126 (LTYMASFN) are cytoplasmic. The chain crosses the membrane as a helical span at residues 127 to 147 (LVYLFTIRIHGALGFLGGVLV). The Lumenal portion of the chain corresponds to 148 to 165 (ALKQTMGDCVVLRVPQVR). Residues 166–186 (VSVVPMLLLALLLLLRLATLL) traverse the membrane as a helical segment. Over 187 to 350 (QSPALASYGF…LITLETAPLL (164 aa)) the chain is Cytoplasmic. Residues 206-229 (RFYQRHSRGRGDMADHFAFATFFP) form a mediates localization to the Golgi region. A disordered region spans residues 299-350 (EDQSAWPSMDDDEEEAGAKTDSPLPLEEASTPPGKVTVPESSLITLETAPLL). Thr329 is subject to Phosphothreonine.

Belongs to the TMEM115 family. In terms of assembly, homooligomer. Interacts with COPB1. May interact with LMAN1. Interacts with the COG complex; probably through COG3.

The protein localises to the golgi apparatus. The protein resides in the golgi stack membrane. In terms of biological role, may play a role in retrograde transport of proteins from the Golgi to the endoplasmic reticulum. May indirectly play a role in protein glycosylation in the Golgi. The sequence is that of Transmembrane protein 115 from Mus musculus (Mouse).